We begin with the raw amino-acid sequence, 309 residues long: tRNA dimethylallyltransferase (309 aa).

Position 9 to 16 (9 to 16 (GPTAVGKT)) interacts with ATP. 11–16 (TAVGKT) serves as a coordination point for substrate. The interval 34-37 (DSMQ) is interaction with substrate tRNA.

It belongs to the IPP transferase family. Monomer. Requires Mg(2+) as cofactor.

The catalysed reaction is adenosine(37) in tRNA + dimethylallyl diphosphate = N(6)-dimethylallyladenosine(37) in tRNA + diphosphate. In terms of biological role, catalyzes the transfer of a dimethylallyl group onto the adenine at position 37 in tRNAs that read codons beginning with uridine, leading to the formation of N6-(dimethylallyl)adenosine (i(6)A). This Clostridium acetobutylicum (strain ATCC 824 / DSM 792 / JCM 1419 / IAM 19013 / LMG 5710 / NBRC 13948 / NRRL B-527 / VKM B-1787 / 2291 / W) protein is tRNA dimethylallyltransferase.